Reading from the N-terminus, the 341-residue chain is Ribosomal RNA small subunit methyltransferase H (341 aa).

S-adenosyl-L-methionine-binding positions include 47 to 49 (GGY), D64, F91, D109, and Q116.

This sequence belongs to the methyltransferase superfamily. RsmH family.

The protein resides in the cytoplasm. It carries out the reaction cytidine(1402) in 16S rRNA + S-adenosyl-L-methionine = N(4)-methylcytidine(1402) in 16S rRNA + S-adenosyl-L-homocysteine + H(+). In terms of biological role, specifically methylates the N4 position of cytidine in position 1402 (C1402) of 16S rRNA. This Rhizobium johnstonii (strain DSM 114642 / LMG 32736 / 3841) (Rhizobium leguminosarum bv. viciae) protein is Ribosomal RNA small subunit methyltransferase H.